Here is a 524-residue protein sequence, read N- to C-terminus: Bifunctional purine biosynthesis protein PurH (524 aa).

The region spanning 1–145 (MIQQALLSVS…KNHRDVTVIV (145 aa)) is the MGS-like domain.

The protein belongs to the PurH family.

The catalysed reaction is (6R)-10-formyltetrahydrofolate + 5-amino-1-(5-phospho-beta-D-ribosyl)imidazole-4-carboxamide = 5-formamido-1-(5-phospho-D-ribosyl)imidazole-4-carboxamide + (6S)-5,6,7,8-tetrahydrofolate. The enzyme catalyses IMP + H2O = 5-formamido-1-(5-phospho-D-ribosyl)imidazole-4-carboxamide. It participates in purine metabolism; IMP biosynthesis via de novo pathway; 5-formamido-1-(5-phospho-D-ribosyl)imidazole-4-carboxamide from 5-amino-1-(5-phospho-D-ribosyl)imidazole-4-carboxamide (10-formyl THF route): step 1/1. Its pathway is purine metabolism; IMP biosynthesis via de novo pathway; IMP from 5-formamido-1-(5-phospho-D-ribosyl)imidazole-4-carboxamide: step 1/1. The protein is Bifunctional purine biosynthesis protein PurH of Ralstonia pickettii (strain 12J).